We begin with the raw amino-acid sequence, 391 residues long: UPF0328 protein ECU06_1650 (391 aa).

Belongs to the UPF0328 family.

The polypeptide is UPF0328 protein ECU06_1650 (Encephalitozoon cuniculi (strain GB-M1) (Microsporidian parasite)).